The sequence spans 490 residues: (21S)-21-acetyl-1-hydroxy-apo-melianone synthase CYP88A164 (490 aa).

Residues 4-24 (DLLWLILAIVVGTYVVLFGFL) form a helical membrane-spanning segment. Heme is bound at residue cysteine 438.

This sequence belongs to the cytochrome P450 family. Requires heme as cofactor. In terms of tissue distribution, mainly expressed in petioles and, to a lower extent, in roots.

It is found in the membrane. It catalyses the reaction (21S)-21-acetoxyl-apo-melianone + reduced [NADPH--hemoprotein reductase] + O2 = (21S)-21-acetyl-1-hydroxy-apo-melianone + oxidized [NADPH--hemoprotein reductase] + H2O + H(+). It participates in secondary metabolite biosynthesis; terpenoid biosynthesis. Its function is as follows. Monooxygenase involved in the biosynthesis of limonoids triterpene natural products such as azadirachtin, an antifeedant widely used as bioinsecticide, and possessing many medicinal applications including anti-tumoral, anti-malarial, anti-rheumatic, antibacterial, anti-inflammatory, anti-pyretic and diuretic effects. Catalyzes the conversion of (21S)-21-acetoxyl-apo-melianone to (21S)-21-acetyl-1-hydroxy-apo-melianone. In Melia azedarach (Chinaberry tree), this protein is (21S)-21-acetyl-1-hydroxy-apo-melianone synthase CYP88A164.